Consider the following 344-residue polypeptide: Nuclear distribution protein nudE homolog 1 (344 aa).

Positions 1–93 (MEDSGKTFES…MQHSEGYRQI (93 aa)) are self-association. Residues 18–188 (WRDLAMTYKQ…ELAVQQKQDK (171 aa)) are a coiled coil. Positions 88–156 (EGYRQISALE…ERNAFLESEL (69 aa)) are interaction with PAFAH1B1. The segment at 167–290 (QRLKDEARDL…QSPSRTSGPA (124 aa)) is interaction with CENPF. The segment at 181–246 (AVQQKQDKPR…DSSTSGTPLT (66 aa)) is disordered. S211 carries the post-translational modification Phosphoserine. A phosphothreonine mark is found at T215 and T228. S239 carries the phosphoserine modification. A phosphothreonine mark is found at T243 and T246. C274 carries S-palmitoyl cysteine; by ZDHHC2, ZDHHC3 and ZDHHC7 lipidation. Residues 279-289 (YDQSPSRTSGP) show a composition bias toward polar residues. A disordered region spans residues 279–337 (YDQSPSRTSGPASGRGTKNRDGVDRRPGSTSVGDKGSGKRLEFGKPASEPASPALPSAQ). The residue at position 282 (S282) is a Phosphoserine. Residues 296–305 (KNRDGVDRRP) are compositionally biased toward basic and acidic residues. Phosphoserine is present on S309. Over residues 324 to 336 (PASEPASPALPSA) the composition is skewed to low complexity.

This sequence belongs to the nudE family. In terms of assembly, homodimer. Interacts with dynactin and PCM1. Interacts with CENPF, LIS1, CNTRL, dynein, tubulin gamma, PAFAH1B1, PCNT, SLMAP and TCP1. Interacts with ZNF365. Interacts with RAB9A; the interaction leads to RAB9A-dynein motor tethering. Interacts (via C-terminus) with MCRS1 (via C-terminus); phosphorylation of NDE1 inhibits the interaction. Phosphorylated in mitosis. Phosphorylation at Thr-246 is essential for the G2/M transition. In terms of tissue distribution, highly expressed in ovary. Also expressed in brain, heart, kidney, large intestine, liver, lung, small intestine and testis.

Its subcellular location is the cytoplasm. The protein localises to the cytoskeleton. It localises to the microtubule organizing center. It is found in the centrosome. The protein resides in the spindle. Its subcellular location is the chromosome. The protein localises to the centromere. It localises to the kinetochore. It is found in the cleavage furrow. The protein resides in the cytoplasmic vesicle membrane. In terms of biological role, required for centrosome duplication and formation and function of the mitotic spindle. Essential for the development of the cerebral cortex. May regulate the production of neurons by controlling the orientation of the mitotic spindle during division of cortical neuronal progenitors of the proliferative ventricular zone of the brain. Orientation of the division plane perpendicular to the layers of the cortex gives rise to two proliferative neuronal progenitors whereas parallel orientation of the division plane yields one proliferative neuronal progenitor and a postmitotic neuron. A premature shift towards a neuronal fate within the progenitor population may result in an overall reduction in the final number of neurons and an increase in the number of neurons in the deeper layers of the cortex. Acts as a RAB9A/B effector that tethers RAB9-associated late endosomes to the dynein motor for their retrograde transport to the trans-Golgi network. This chain is Nuclear distribution protein nudE homolog 1, found in Mus musculus (Mouse).